The following is a 471-amino-acid chain: MAVGHVIQVMGPVIDVRFEHGQLPALNNALTLDIERGEGNTTKLTLEVALHLGDDAVRTIAMSSTDGVQRGAQVTDTGAPISVPVGDATLGRVFNVLGEKIDLEPELDGTVRRDPIHRQAPKFEELSTKVEILETGIKVVDLLAPYIKGGKIGLFGGAGVGKTVLIQELINNIAQEHGGISVFAGVGERTREGNDLFHEMSDSGVIKKTAMVFGQMNEPPGARMRVALSGLTMAEYFRDEQGQDVLLFIDNIFRFTQAGSEVSALLGRMPSAVGYQPTLATEMGQLQERITSTNVGSVTSIQAVFVPADDYTDPAPATAFAHLDATTNLERKLTEMGIYPAVDPLASTSRALTPAVVGEEHYEVARQVQATLQKYRELQDIIAILGMDELSDEDKKTVSRARRIQFFLSQNFHVAEQFTGQKGSYVPVKQTVQDFKAILEGKYDHIPEDAFRLVGGIEAVLEQAKGMGVEV.

156–163 (GGAGVGKT) contributes to the ATP binding site.

It belongs to the ATPase alpha/beta chains family. F-type ATPases have 2 components, CF(1) - the catalytic core - and CF(0) - the membrane proton channel. CF(1) has five subunits: alpha(3), beta(3), gamma(1), delta(1), epsilon(1). CF(0) has three main subunits: a(1), b(2) and c(9-12). The alpha and beta chains form an alternating ring which encloses part of the gamma chain. CF(1) is attached to CF(0) by a central stalk formed by the gamma and epsilon chains, while a peripheral stalk is formed by the delta and b chains.

It is found in the cell membrane. The catalysed reaction is ATP + H2O + 4 H(+)(in) = ADP + phosphate + 5 H(+)(out). Produces ATP from ADP in the presence of a proton gradient across the membrane. The catalytic sites are hosted primarily by the beta subunits. The sequence is that of ATP synthase subunit beta from Macrococcus caseolyticus (strain JCSC5402) (Macrococcoides caseolyticum).